A 91-amino-acid chain; its full sequence is Large ribosomal subunit protein bL27 (91 aa).

Residues Met-1–Gly-22 are disordered.

This sequence belongs to the bacterial ribosomal protein bL27 family.

This Methylocella silvestris (strain DSM 15510 / CIP 108128 / LMG 27833 / NCIMB 13906 / BL2) protein is Large ribosomal subunit protein bL27.